A 758-amino-acid polypeptide reads, in one-letter code: Phosphoribosylformylglycinamidine synthase subunit PurL (758 aa).

Residue histidine 57 is part of the active site. Tyrosine 60 and arginine 104 together coordinate ATP. Glutamate 106 lines the Mg(2+) pocket. Substrate is bound by residues 107–110 (SHNH) and arginine 129. The active-site Proton acceptor is the histidine 108. Aspartate 130 lines the Mg(2+) pocket. Residue glutamine 254 coordinates substrate. Aspartate 282 contributes to the Mg(2+) binding site. Position 326–328 (326–328 (ESQ)) interacts with substrate. Asparagine 509 and glycine 546 together coordinate ATP. Asparagine 547 serves as a coordination point for Mg(2+). Position 549 (serine 549) interacts with substrate.

It belongs to the FGAMS family. In terms of assembly, monomer. Part of the FGAM synthase complex composed of 1 PurL, 1 PurQ and 2 PurS subunits.

It localises to the cytoplasm. The catalysed reaction is N(2)-formyl-N(1)-(5-phospho-beta-D-ribosyl)glycinamide + L-glutamine + ATP + H2O = 2-formamido-N(1)-(5-O-phospho-beta-D-ribosyl)acetamidine + L-glutamate + ADP + phosphate + H(+). It functions in the pathway purine metabolism; IMP biosynthesis via de novo pathway; 5-amino-1-(5-phospho-D-ribosyl)imidazole from N(2)-formyl-N(1)-(5-phospho-D-ribosyl)glycinamide: step 1/2. Its function is as follows. Part of the phosphoribosylformylglycinamidine synthase complex involved in the purines biosynthetic pathway. Catalyzes the ATP-dependent conversion of formylglycinamide ribonucleotide (FGAR) and glutamine to yield formylglycinamidine ribonucleotide (FGAM) and glutamate. The FGAM synthase complex is composed of three subunits. PurQ produces an ammonia molecule by converting glutamine to glutamate. PurL transfers the ammonia molecule to FGAR to form FGAM in an ATP-dependent manner. PurS interacts with PurQ and PurL and is thought to assist in the transfer of the ammonia molecule from PurQ to PurL. This Corynebacterium ammoniagenes (Brevibacterium ammoniagenes) protein is Phosphoribosylformylglycinamidine synthase subunit PurL.